A 288-amino-acid polypeptide reads, in one-letter code: Pantothenate synthetase (288 aa).

35–42 is a binding site for ATP; that stretch reads MGALHDGH. The active-site Proton donor is the His42. (R)-pantoate is bound at residue Gln66. Gln66 lines the beta-alanine pocket. An ATP-binding site is contributed by 152-155; it reads GEKD. Gln158 is a (R)-pantoate binding site. ATP contacts are provided by residues Gly181 and 189–192; that span reads LSSR.

It belongs to the pantothenate synthetase family. As to quaternary structure, homodimer.

It is found in the cytoplasm. It carries out the reaction (R)-pantoate + beta-alanine + ATP = (R)-pantothenate + AMP + diphosphate + H(+). The protein operates within cofactor biosynthesis; (R)-pantothenate biosynthesis; (R)-pantothenate from (R)-pantoate and beta-alanine: step 1/1. In terms of biological role, catalyzes the condensation of pantoate with beta-alanine in an ATP-dependent reaction via a pantoyl-adenylate intermediate. The sequence is that of Pantothenate synthetase from Maricaulis maris (strain MCS10) (Caulobacter maris).